Here is a 497-residue protein sequence, read N- to C-terminus: Glutamyl-tRNA reductase (497 aa).

Substrate-binding positions include 58-61, Ser118, 123-125, and Gln129; these read TCNR and EQQ. Cys59 serves as the catalytic Nucleophile. Position 214 to 219 (214 to 219) interacts with NADP(+); that stretch reads GAGAMA. A compositionally biased stretch (polar residues) spans 461 to 477; it reads VTQPGQADSSAAQTAGT. Positions 461–486 are disordered; it reads VTQPGQADSSAAQTAGTSARADQIPS.

It belongs to the glutamyl-tRNA reductase family. Homodimer.

The catalysed reaction is (S)-4-amino-5-oxopentanoate + tRNA(Glu) + NADP(+) = L-glutamyl-tRNA(Glu) + NADPH + H(+). Its pathway is porphyrin-containing compound metabolism; protoporphyrin-IX biosynthesis; 5-aminolevulinate from L-glutamyl-tRNA(Glu): step 1/2. Functionally, catalyzes the NADPH-dependent reduction of glutamyl-tRNA(Glu) to glutamate 1-semialdehyde (GSA). The polypeptide is Glutamyl-tRNA reductase (Corynebacterium jeikeium (strain K411)).